The chain runs to 82 residues: Small ribosomal subunit protein uS17 (82 aa).

This sequence belongs to the universal ribosomal protein uS17 family. In terms of assembly, part of the 30S ribosomal subunit.

Its function is as follows. One of the primary rRNA binding proteins, it binds specifically to the 5'-end of 16S ribosomal RNA. This chain is Small ribosomal subunit protein uS17, found in Azorhizobium caulinodans (strain ATCC 43989 / DSM 5975 / JCM 20966 / LMG 6465 / NBRC 14845 / NCIMB 13405 / ORS 571).